The primary structure comprises 259 residues: Putative zinc metalloprotease Rip2 (259 aa).

2 helical membrane passes run 14–34 and 39–59; these read PIFL…WIAA and PLSY…SLCL. Zn(2+) is bound at residue His60. The active site involves Glu61. A Zn(2+)-binding site is contributed by His64. The next 4 helical transmembrane spans lie at 96–116, 129–149, 159–179, and 203–223; these read LGLP…GAVY, IVSL…LGLT, VFWS…VLNL, and LAPA…TPAL.

The protein belongs to the peptidase M50B family. It depends on Zn(2+) as a cofactor.

It localises to the cell membrane. In Mycolicibacterium smegmatis (strain ATCC 700084 / mc(2)155) (Mycobacterium smegmatis), this protein is Putative zinc metalloprotease Rip2 (rip2).